A 499-amino-acid polypeptide reads, in one-letter code: MAAASVSAASDSQFSSVLAEPSRSNGNMVHHSSSPYVLYPPDKPFLNSDLRRSPNKPTFAYPESNSRAIFSALKNLQDKIRRLELERIRAEESVKTLSRETIEYKKVLDEQIQERENSKNEESKHNQELASQLVAAENKCNLLEKQLEYMRNMIKHAEMERTSVLEKQVSLERERQHDQSHVQSQLEKLDLLEQEYNRLTAMQALAEKKMQELESKLHEEEQERKRMQARAAELQSGIEANRLIFEDRNTSCVSTSTRKIKKKKSKPPEKKGFRNNFGAQPHYRLCLGDMPFVAGTSTSPSHAVVANVQHVLHLMKHHSRALCNDRVVNSVPLAKQACSRGSKSKKSVAPPSSSVNEELSDVLQTLQDEFGQMSFDHQQLTKLIQESPSEELKDNLECELEALVRRMEAKANQITKVRKYQAQLEKQSTDKQKELKGNKKTLDEEGNSSSRSSVITRTTSKKDFTKQRPGEKSRKNLQLLKDMQTLQNSLQSSNVCWDY.

Over residues 1 to 16 the composition is skewed to low complexity; sequence MAAASVSAASDSQFSS. The interval 1 to 41 is disordered; sequence MAAASVSAASDSQFSSVLAEPSRSNGNMVHHSSSPYVLYPP. Positions 22 to 35 are enriched in polar residues; sequence SRSNGNMVHHSSSP. Ser-53 carries the phosphoserine modification. The tract at residues 58–239 is centrosome localization domain (CLD); it reads TFAYPESNSR…RAAELQSGIE (182 aa). The stretch at 63 to 242 forms a coiled coil; that stretch reads ESNSRAIFSA…ELQSGIEANR (180 aa). Disordered stretches follow at residues 255 to 275 and 424 to 476; these read TSTR…GFRN and LEKQ…SRKN. The tract at residues 278-490 is mediates interaction with microtubules; it reads GAQPHYRLCL…KDMQTLQNSL (213 aa). The stretch at 388–491 forms a coiled coil; the sequence is PSEELKDNLE…DMQTLQNSLQ (104 aa). Residues 427-443 are compositionally biased toward basic and acidic residues; sequence QSTDKQKELKGNKKTLD. The span at 448 to 458 shows a compositional bias: low complexity; the sequence is SSSRSSVITRT. A compositionally biased stretch (basic and acidic residues) spans 460-474; that stretch reads SKKDFTKQRPGEKSR.

The protein belongs to the translokin family. As to quaternary structure, homodimer and homooligomer. Interacts with FGF2 and RAP80. Does not interact with FGF1 or FGF2 isoform 24 kDa. Interacts with microtubules. Ubiquitous (at protein level).

The protein resides in the nucleus. Its subcellular location is the cytoplasm. It is found in the cytoskeleton. It localises to the microtubule organizing center. The protein localises to the centrosome. Functionally, centrosomal protein which may be required for microtubule attachment to centrosomes. May act by forming ring-like structures around microtubules. Mediates nuclear translocation and mitogenic activity of the internalized growth factor FGF2. This Rattus norvegicus (Rat) protein is Centrosomal protein of 57 kDa (Cep57).